A 114-amino-acid chain; its full sequence is RNA polymerase-binding protein RbpA (114 aa).

The protein belongs to the RNA polymerase-binding protein RbpA family. In terms of assembly, monomer. Forms a complex with the RNAP catalytic core, specifically with the beta subunit (RpoB); its binding site may overlap with that of Rif. May bind free principal sigma factors.

Functionally, binds to RNA polymerase (RNAP), probably stimulating transcriptions from principal, but not alternative sigma factor promoters. Partially restores transcription in the presence of rifampicin (Rif) in vitro; overexpression leads to an increase in the Rif tolerance in vivo, with smaller colonies. Seems to act by removing Rif from its binding site and preventing its further binding. No longer stimulates transcription in Rif-resistant RNA polymerase (with mutations in rpoB). In Mycolicibacterium smegmatis (strain ATCC 700084 / mc(2)155) (Mycobacterium smegmatis), this protein is RNA polymerase-binding protein RbpA.